Here is a 534-residue protein sequence, read N- to C-terminus: Probable DNA ligase (534 aa).

Glu-213 is a binding site for ATP. The active-site N6-AMP-lysine intermediate is Lys-215. ATP is bound by residues Arg-220, Arg-235, Glu-264, Phe-303, Arg-375, and Lys-381.

Belongs to the ATP-dependent DNA ligase family. The cofactor is Mg(2+).

The enzyme catalyses ATP + (deoxyribonucleotide)n-3'-hydroxyl + 5'-phospho-(deoxyribonucleotide)m = (deoxyribonucleotide)n+m + AMP + diphosphate.. Its function is as follows. DNA ligase that seals nicks in double-stranded DNA during DNA replication, DNA recombination and DNA repair. This chain is Probable DNA ligase, found in Mycolicibacterium vanbaalenii (strain DSM 7251 / JCM 13017 / BCRC 16820 / KCTC 9966 / NRRL B-24157 / PYR-1) (Mycobacterium vanbaalenii).